We begin with the raw amino-acid sequence, 180 residues long: ADP-ribosylation factor 4 (180 aa).

Glycine 2 is lipidated: N-myristoyl glycine. Residues 24–31, 67–71, and 126–129 each bind GTP; these read GLDAAGKT, DVGGQ, and NKQD. Residue serine 147 is modified to Phosphoserine.

It belongs to the small GTPase superfamily. Arf family. Forms a complex containing RAB11A, ASAP1, RAB3IP, RAP11FIP3 and ARF4; the complex promotes preciliary trafficking; the complex binds to RHO in photoreceptor cells and promotes RHO ciliary transport.

The protein localises to the golgi apparatus. The protein resides in the membrane. GTP-binding protein that functions as an allosteric activator of the cholera toxin catalytic subunit, an ADP-ribosyltransferase. Involved in protein trafficking; may modulate vesicle budding and uncoating within the Golgi apparatus. Part of the ciliary targeting complex containing Rab11, ASAP1, Rabin8/RAB3IP, RAB11FIP3 and ARF4, which direct preciliary vesicle trafficking to mother centriole and ciliogenesis initiation. The sequence is that of ADP-ribosylation factor 4 (Arf4) from Mus musculus (Mouse).